Here is a 100-residue protein sequence, read N- to C-terminus: uncharacterized protein (100 aa).

This is an uncharacterized protein from Haemophilus influenzae (strain ATCC 51907 / DSM 11121 / KW20 / Rd).